Reading from the N-terminus, the 204-residue chain is Holliday junction branch migration complex subunit RuvA (204 aa).

A domain I region spans residues Met1 to Arg64. The tract at residues Thr65–Pro143 is domain II. A flexible linker region spans residues Ala144 to Glu153. Residues Glu153 to Gly204 form a domain III region.

Belongs to the RuvA family. Homotetramer. Forms an RuvA(8)-RuvB(12)-Holliday junction (HJ) complex. HJ DNA is sandwiched between 2 RuvA tetramers; dsDNA enters through RuvA and exits via RuvB. An RuvB hexamer assembles on each DNA strand where it exits the tetramer. Each RuvB hexamer is contacted by two RuvA subunits (via domain III) on 2 adjacent RuvB subunits; this complex drives branch migration. In the full resolvosome a probable DNA-RuvA(4)-RuvB(12)-RuvC(2) complex forms which resolves the HJ.

Its subcellular location is the cytoplasm. In terms of biological role, the RuvA-RuvB-RuvC complex processes Holliday junction (HJ) DNA during genetic recombination and DNA repair, while the RuvA-RuvB complex plays an important role in the rescue of blocked DNA replication forks via replication fork reversal (RFR). RuvA specifically binds to HJ cruciform DNA, conferring on it an open structure. The RuvB hexamer acts as an ATP-dependent pump, pulling dsDNA into and through the RuvAB complex. HJ branch migration allows RuvC to scan DNA until it finds its consensus sequence, where it cleaves and resolves the cruciform DNA. This chain is Holliday junction branch migration complex subunit RuvA, found in Halorhodospira halophila (strain DSM 244 / SL1) (Ectothiorhodospira halophila (strain DSM 244 / SL1)).